Here is a 98-residue protein sequence, read N- to C-terminus: NADH-ubiquinone oxidoreductase chain 4L (98 aa).

Transmembrane regions (helical) follow at residues 1 to 21 (MSLIHINIFLAFTVSLMGLLM), 29 to 49 (SLLCLEGMMLSLFIMATMMVL), and 61 to 81 (IILLVFAACEAALGLSLLVMI).

The protein belongs to the complex I subunit 4L family. In terms of assembly, core subunit of respiratory chain NADH dehydrogenase (Complex I) which is composed of 45 different subunits.

It localises to the mitochondrion inner membrane. It carries out the reaction a ubiquinone + NADH + 5 H(+)(in) = a ubiquinol + NAD(+) + 4 H(+)(out). Core subunit of the mitochondrial membrane respiratory chain NADH dehydrogenase (Complex I) which catalyzes electron transfer from NADH through the respiratory chain, using ubiquinone as an electron acceptor. Part of the enzyme membrane arm which is embedded in the lipid bilayer and involved in proton translocation. This chain is NADH-ubiquinone oxidoreductase chain 4L (MT-ND4L), found in Rhinoceros unicornis (Greater Indian rhinoceros).